The primary structure comprises 366 residues: Chorismate synthase (366 aa).

NADP(+) is bound at residue Arg48. FMN-binding positions include 125–127, 241–242, Gly285, 300–304, and Arg326; these read RSS, NA, and KPTSS.

This sequence belongs to the chorismate synthase family. In terms of assembly, homotetramer. The cofactor is FMNH2.

It catalyses the reaction 5-O-(1-carboxyvinyl)-3-phosphoshikimate = chorismate + phosphate. Its pathway is metabolic intermediate biosynthesis; chorismate biosynthesis; chorismate from D-erythrose 4-phosphate and phosphoenolpyruvate: step 7/7. In terms of biological role, catalyzes the anti-1,4-elimination of the C-3 phosphate and the C-6 proR hydrogen from 5-enolpyruvylshikimate-3-phosphate (EPSP) to yield chorismate, which is the branch point compound that serves as the starting substrate for the three terminal pathways of aromatic amino acid biosynthesis. This reaction introduces a second double bond into the aromatic ring system. The sequence is that of Chorismate synthase from Roseobacter denitrificans (strain ATCC 33942 / OCh 114) (Erythrobacter sp. (strain OCh 114)).